Here is a 187-residue protein sequence, read N- to C-terminus: ATP synthase subunit b, chloroplastic (187 aa).

Residues 29–49 form a helical membrane-spanning segment; the sequence is LAVVLGVLIYLGKGVCAGCIL.

The protein belongs to the ATPase B chain family. In terms of assembly, F-type ATPases have 2 components, F(1) - the catalytic core - and F(0) - the membrane proton channel. F(1) has five subunits: alpha(3), beta(3), gamma(1), delta(1), epsilon(1). F(0) has four main subunits: a(1), b(1), b'(1) and c(10-14). The alpha and beta chains form an alternating ring which encloses part of the gamma chain. F(1) is attached to F(0) by a central stalk formed by the gamma and epsilon chains, while a peripheral stalk is formed by the delta, b and b' chains.

The protein localises to the plastid. It is found in the chloroplast thylakoid membrane. F(1)F(0) ATP synthase produces ATP from ADP in the presence of a proton or sodium gradient. F-type ATPases consist of two structural domains, F(1) containing the extramembraneous catalytic core and F(0) containing the membrane proton channel, linked together by a central stalk and a peripheral stalk. During catalysis, ATP synthesis in the catalytic domain of F(1) is coupled via a rotary mechanism of the central stalk subunits to proton translocation. Functionally, component of the F(0) channel, it forms part of the peripheral stalk, linking F(1) to F(0). The sequence is that of ATP synthase subunit b, chloroplastic from Angiopteris evecta (Mule's foot fern).